The primary structure comprises 1362 residues: MTSSTDYHADSTPGTTSNMELRIREYQLEMLNESLKRNLIVVMPTGTGKTQVAILRILADIDKGNSDKFVWLLCPTVALSEQQYIQYATVFLPSGAEDKAIWDNALSGIKIAVSTYQVLYDALSHGFVKLSQMSLLIFDEAHHCKKDHVANKIMQVHYHKQHQSGVQNLPKILGLTASPILSDLSSLEIVESNLGSICKTPRQYYAQLLQFTNRPLILPRLPTYTIPNCSVKAPILEKLCGILSSEDEVPSSSKMKSKQLKHIRRFMQTSESINQELGIWAATEYMRKSIMHFKESMRMGAEKTNISNYGKDFAMEILTRLGKLQDCSPAIQPEEISPMCQCLLDELSKAYREGFCGLVFVTQRATVLALKWLIENHPLTSHLFTCGTFIGMSTTQYSKTELGNLHDIRNQTETLEKFRQGSLNLIITTDALEEGIDVPACNTVLNFNCQLSLKSFIQRRGRARRENSQFIIIMEDESGPRYLKRLEMEEIELVQKLQNAERRQIPANELDFDKYERISLSLDIDRTGAQLIMREAVGYLYNFCSKLPAQLYVSNKPLFTYERNNYGRFRAVVKLPSNLDPSLQSFSSSRSWSRLKYAREDAALQAYKALYQAGLVNDYLVPTQVSDHLEGDIIFRSHYSIQNQLDPWQDIALLWKLDSQLYAHNLRIIRPEEDEIHLHMILPTQLDTTIHIPLFIDYCTTYTAILTPGHPITTDISLCQQVTNLIFQSVYRDHCSRRNLDYAFLLVPELEETKLIEFLERYSGSVSLTELLNQEATPSALGLLRSHTRPSRPLLVEPWVAGECFLPDELSISSFDAKVKYMTNRRNFLSHGNLAAGKSTNCEARIGLEANVKSMSVRDFFVDKLPSMFAQVALFTPSISHEVEVYMIAQILRQELSLRSVTPWQRIDLLAIAIRPTSIEHRATFRLLAFIGDAFMKYLFAMQLFLHHHLWHEGLLSSLKQRNLSDAGLAHAIHQSGLGKFLISKHLNGKRWVPPLVSGIEPASNEARQRSIGAATLADMTKAVVGAAFTDGGLNQAAACASVMFPKLKSWNASSLHDGTYSKTRPENAVASTAIVDMEELLGYTFTDKSLAVESMTHPSCTGLVQTTSYRRLSFLGASVLEWIVVSYLHRHAQVMNPQRMQSLKSAFTNNTFLTFIAITFHQVREQNHIDVDDEHNVHKNVTTCSIRLWDFLRLHSDALSTELSDFVQKSSEKADAIKHELWEQRFYPWVRLRALGDMRVLSDIIQSIFGAVFIDSQATLASCDALAEKLGIVPLLEHFISHQITTDHPKDTLQAILPGRKVSYQICVDKVHPGTLRCSALADSSEIASVEGQMNDEVIKMQAAETAVRLLRKGFALSETS.

The Helicase ATP-binding domain maps to 30 to 197 (MLNESLKRNL…EIVESNLGSI (168 aa)). 43-50 (MPTGTGKT) contacts ATP. The short motif at 139-142 (DEAH) is the DEAH box element. Residues 343–505 (LLDELSKAYR…KLQNAERRQI (163 aa)) form the Helicase C-terminal domain. One can recognise a Dicer dsRNA-binding fold domain in the interval 536–630 (AVGYLYNFCS…VPTQVSDHLE (95 aa)). 2 consecutive RNase III domains span residues 889–1033 (AQIL…TDGG) and 1075–1258 (IVDM…IDSQ).

The protein belongs to the helicase family. Dicer subfamily.

Dicer-like endonuclease involved in cleaving double-stranded RNA in the RNA interference (RNAi) pathway. Produces 21 to 25 bp dsRNAs (siRNAs) which target the selective destruction of homologous RNAs leading to sequence-specific suppression of gene expression, called post-transcriptional gene silencing (PTGS). Part of a broad host defense response against viral infection and transposons. This Aspergillus niger (strain ATCC MYA-4892 / CBS 513.88 / FGSC A1513) protein is Dicer-like protein 2-2 (dcl2-2).